Here is a 692-residue protein sequence, read N- to C-terminus: ATP-dependent DNA helicase DinG (692 aa).

Positions 16–293 constitute a Helicase ATP-binding domain; the sequence is NLGNQLDNFI…AELAEYKKAA (278 aa). 56–63 lines the ATP pocket; the sequence is AGTGIGKS. [4Fe-4S] cluster is bound at residue Cys123. The DEAH box motif lies at 134 to 137; that stretch reads NNDQ. Residues Cys192 and Cys202 each coordinate [4Fe-4S] cluster. A DEAH box motif is present at residues 247–250; it reads DEAH. Residues 514–692 form the Helicase C-terminal domain; that stretch reads LIKTLPEYLE…PPFKRVIEYS (179 aa).

It belongs to the helicase family. DinG subfamily. Type 1 sub-subfamily. The cofactor is [4Fe-4S] cluster.

The catalysed reaction is Couples ATP hydrolysis with the unwinding of duplex DNA at the replication fork by translocating in the 5'-3' direction. This creates two antiparallel DNA single strands (ssDNA). The leading ssDNA polymer is the template for DNA polymerase III holoenzyme which synthesizes a continuous strand.. The enzyme catalyses ATP + H2O = ADP + phosphate + H(+). In terms of biological role, DNA-dependent ATPase and 5'-3' DNA helicase. Unwinds D-loops, R-loops, forked DNA and G-quadruplex DNA. This is ATP-dependent DNA helicase DinG from Photobacterium profundum (strain SS9).